Consider the following 310-residue polypeptide: Methionyl-tRNA formyltransferase (310 aa).

Residue 111–114 (SLLP) coordinates (6S)-5,6,7,8-tetrahydrofolate.

The protein belongs to the Fmt family.

It carries out the reaction L-methionyl-tRNA(fMet) + (6R)-10-formyltetrahydrofolate = N-formyl-L-methionyl-tRNA(fMet) + (6S)-5,6,7,8-tetrahydrofolate + H(+). Its function is as follows. Attaches a formyl group to the free amino group of methionyl-tRNA(fMet). The formyl group appears to play a dual role in the initiator identity of N-formylmethionyl-tRNA by promoting its recognition by IF2 and preventing the misappropriation of this tRNA by the elongation apparatus. The protein is Methionyl-tRNA formyltransferase of Rhodopseudomonas palustris (strain BisB18).